A 346-amino-acid polypeptide reads, in one-letter code: Uroporphyrinogen decarboxylase (346 aa).

Residues 23 to 27 (RQAGR), aspartate 72, tyrosine 155, serine 209, and histidine 322 contribute to the substrate site.

The protein belongs to the uroporphyrinogen decarboxylase family. In terms of assembly, homodimer.

The protein resides in the cytoplasm. The enzyme catalyses uroporphyrinogen III + 4 H(+) = coproporphyrinogen III + 4 CO2. It functions in the pathway porphyrin-containing compound metabolism; protoporphyrin-IX biosynthesis; coproporphyrinogen-III from 5-aminolevulinate: step 4/4. In terms of biological role, catalyzes the decarboxylation of four acetate groups of uroporphyrinogen-III to yield coproporphyrinogen-III. This is Uroporphyrinogen decarboxylase from Anaeromyxobacter sp. (strain Fw109-5).